The following is a 309-amino-acid chain: tRNA uridine(34) hydroxylase (309 aa).

The 95-residue stretch at 126-220 folds into the Rhodanese domain; that stretch reads SDPEVIVIDT…YLEQIPPEES (95 aa). The active-site Cysteine persulfide intermediate is Cys-180.

The protein belongs to the TrhO family.

The enzyme catalyses uridine(34) in tRNA + AH2 + O2 = 5-hydroxyuridine(34) in tRNA + A + H2O. In terms of biological role, catalyzes oxygen-dependent 5-hydroxyuridine (ho5U) modification at position 34 in tRNAs. The sequence is that of tRNA uridine(34) hydroxylase from Nostoc sp. (strain PCC 7120 / SAG 25.82 / UTEX 2576).